Here is an 83-residue protein sequence, read N- to C-terminus: Gene 3 protein (83 aa).

The polypeptide is Gene 3 protein (3) (Mycobacterium (Mycobacteriophage L5)).